A 417-amino-acid chain; its full sequence is Serpin H1 (417 aa).

Positions 1–17 are cleaved as a signal peptide; sequence MRSLLLGTLCLLAVALA. N6-succinyllysine is present on lysine 93. Asparagine 119 and asparagine 124 each carry an N-linked (GlcNAc...) asparagine glycan. At serine 140 the chain carries Phosphoserine. Position 206 is an N6-acetyllysine (lysine 206). Lysine 295 bears the N6-succinyllysine mark. Position 318 is an N6-acetyllysine (lysine 318). Asparagine 394 is a glycosylation site (N-linked (GlcNAc...) asparagine). The Prevents secretion from ER signature appears at 414 to 417; the sequence is RDEL.

The protein belongs to the serpin family.

The protein resides in the endoplasmic reticulum lumen. Its function is as follows. Binds specifically to collagen. Could be involved as a chaperone in the biosynthetic pathway of collagen. This Mus musculus (Mouse) protein is Serpin H1 (Serpinh1).